The chain runs to 171 residues: Crossover junction endodeoxyribonuclease RuvC (171 aa).

Residues Asp-7, Glu-66, and Asp-138 contribute to the active site. Asp-7, Glu-66, and Asp-138 together coordinate Mg(2+).

This sequence belongs to the RuvC family. As to quaternary structure, homodimer which binds Holliday junction (HJ) DNA. The HJ becomes 2-fold symmetrical on binding to RuvC with unstacked arms; it has a different conformation from HJ DNA in complex with RuvA. In the full resolvosome a probable DNA-RuvA(4)-RuvB(12)-RuvC(2) complex forms which resolves the HJ. Requires Mg(2+) as cofactor.

It localises to the cytoplasm. It carries out the reaction Endonucleolytic cleavage at a junction such as a reciprocal single-stranded crossover between two homologous DNA duplexes (Holliday junction).. Its function is as follows. The RuvA-RuvB-RuvC complex processes Holliday junction (HJ) DNA during genetic recombination and DNA repair. Endonuclease that resolves HJ intermediates. Cleaves cruciform DNA by making single-stranded nicks across the HJ at symmetrical positions within the homologous arms, yielding a 5'-phosphate and a 3'-hydroxyl group; requires a central core of homology in the junction. The consensus cleavage sequence is 5'-(A/T)TT(C/G)-3'. Cleavage occurs on the 3'-side of the TT dinucleotide at the point of strand exchange. HJ branch migration catalyzed by RuvA-RuvB allows RuvC to scan DNA until it finds its consensus sequence, where it cleaves and resolves the cruciform DNA. In Thiobacillus denitrificans (strain ATCC 25259 / T1), this protein is Crossover junction endodeoxyribonuclease RuvC.